A 460-amino-acid chain; its full sequence is ATP synthase subunit beta (460 aa).

Residue 150–157 participates in ATP binding; sequence GGAGVGKT.

This sequence belongs to the ATPase alpha/beta chains family. In terms of assembly, F-type ATPases have 2 components, CF(1) - the catalytic core - and CF(0) - the membrane proton channel. CF(1) has five subunits: alpha(3), beta(3), gamma(1), delta(1), epsilon(1). CF(0) has three main subunits: a(1), b(2) and c(9-12). The alpha and beta chains form an alternating ring which encloses part of the gamma chain. CF(1) is attached to CF(0) by a central stalk formed by the gamma and epsilon chains, while a peripheral stalk is formed by the delta and b chains.

Its subcellular location is the cell inner membrane. It catalyses the reaction ATP + H2O + 4 H(+)(in) = ADP + phosphate + 5 H(+)(out). Functionally, produces ATP from ADP in the presence of a proton gradient across the membrane. The catalytic sites are hosted primarily by the beta subunits. In Pectobacterium carotovorum subsp. carotovorum (strain PC1), this protein is ATP synthase subunit beta.